Reading from the N-terminus, the 303-residue chain is GMP synthase [glutamine-hydrolyzing] subunit B (303 aa).

The GMPS ATP-PPase domain maps to M1–R183. S28–S34 serves as a coordination point for ATP.

As to quaternary structure, heterodimer composed of a glutamine amidotransferase subunit (A) and a GMP-binding subunit (B).

It catalyses the reaction XMP + L-glutamine + ATP + H2O = GMP + L-glutamate + AMP + diphosphate + 2 H(+). It functions in the pathway purine metabolism; GMP biosynthesis; GMP from XMP (L-Gln route): step 1/1. Catalyzes the synthesis of GMP from XMP. This chain is GMP synthase [glutamine-hydrolyzing] subunit B (guaAB), found in Archaeoglobus fulgidus (strain ATCC 49558 / DSM 4304 / JCM 9628 / NBRC 100126 / VC-16).